Here is a 387-residue protein sequence, read N- to C-terminus: 3-ketoacyl-CoA thiolase (387 aa).

The active-site Acyl-thioester intermediate is Cys91. Residues His343 and Cys373 each act as proton acceptor in the active site.

Belongs to the thiolase-like superfamily. Thiolase family. In terms of assembly, heterotetramer of two alpha chains (FadB) and two beta chains (FadA).

Its subcellular location is the cytoplasm. It catalyses the reaction an acyl-CoA + acetyl-CoA = a 3-oxoacyl-CoA + CoA. Its pathway is lipid metabolism; fatty acid beta-oxidation. Catalyzes the final step of fatty acid oxidation in which acetyl-CoA is released and the CoA ester of a fatty acid two carbons shorter is formed. The protein is 3-ketoacyl-CoA thiolase of Pectobacterium carotovorum subsp. carotovorum (strain PC1).